Reading from the N-terminus, the 346-residue chain is Nicotinate-nucleotide--dimethylbenzimidazole phosphoribosyltransferase (346 aa).

The Proton acceptor role is filled by Glu-312.

The protein belongs to the CobT family.

It catalyses the reaction 5,6-dimethylbenzimidazole + nicotinate beta-D-ribonucleotide = alpha-ribazole 5'-phosphate + nicotinate + H(+). It functions in the pathway nucleoside biosynthesis; alpha-ribazole biosynthesis; alpha-ribazole from 5,6-dimethylbenzimidazole: step 1/2. Catalyzes the synthesis of alpha-ribazole-5'-phosphate from nicotinate mononucleotide (NAMN) and 5,6-dimethylbenzimidazole (DMB). This Cupriavidus necator (strain ATCC 17699 / DSM 428 / KCTC 22496 / NCIMB 10442 / H16 / Stanier 337) (Ralstonia eutropha) protein is Nicotinate-nucleotide--dimethylbenzimidazole phosphoribosyltransferase.